The following is a 2710-amino-acid chain: Serine/threonine-protein kinase ATR (2710 aa).

Residues 1647-2257 form the FAT domain; sequence TLAKASFRCQ…LWMMAAVSKS (611 aa). The region spanning 2368-2680 is the PI3K/PI4K catalytic domain; it reads IADDAEILNS…GVNAAPSLPL (313 aa). The tract at residues 2374–2380 is G-loop; sequence ILNSLQK. The tract at residues 2545–2553 is catalytic loop; sequence GLGDRHGEN. The activation loop stretch occupies residues 2565–2589; it reads HVDFSCLFDKGLLLEKPEVVPFRFT. The 33-residue stretch at 2678–2710 folds into the FATC domain; it reads LPLSVEGQARRLIAEAVSHSNLGKMYVWWMAWF.

This sequence belongs to the PI3/PI4-kinase family. ATM subfamily.

Its subcellular location is the nucleus. It carries out the reaction L-seryl-[protein] + ATP = O-phospho-L-seryl-[protein] + ADP + H(+). The catalysed reaction is L-threonyl-[protein] + ATP = O-phospho-L-threonyl-[protein] + ADP + H(+). Functionally, probable serine/threonine kinase. Seems to play a central role in cell-cycle regulation by transmitting DNA damage signals to downstream effectors of cell-cycle progression. May recognize the substrate consensus sequence [ST]-Q and phosphorylate histone variant H2AX to form H2AXS139ph at sites of DNA damage, thereby regulating DNA damage response mechanism. This chain is Serine/threonine-protein kinase ATR, found in Oryza sativa subsp. japonica (Rice).